A 66-amino-acid chain; its full sequence is MPKMKTHRGSAKRFKRTGSGKLKRRHGFTSHMFANKSQKQKRKLRKSAMVSAGDFKRIRQMVAKMK.

Over residues 1 to 28 the composition is skewed to basic residues; it reads MPKMKTHRGSAKRFKRTGSGKLKRRHGF. A disordered region spans residues 1–50; it reads MPKMKTHRGSAKRFKRTGSGKLKRRHGFTSHMFANKSQKQKRKLRKSAMV.

The protein belongs to the bacterial ribosomal protein bL35 family.

The protein is Large ribosomal subunit protein bL35 of Listeria monocytogenes serotype 4a (strain HCC23).